Here is a 421-residue protein sequence, read N- to C-terminus: Nuclear speckle RNA-binding protein B (421 aa).

Disordered regions lie at residues 1–64 (MDNR…VNIY), 86–114 (TGQT…MVDT), and 197–226 (TDPQ…GIPH). A compositionally biased stretch (pro residues) spans 33 to 44 (PLAPPHPQPQPP). A compositionally biased stretch (low complexity) spans 89 to 103 (TSTSTTSSSSSSSTS). The RRM domain occupies 323–409 (NTLYVEGLPS…KILRLQFFRN (87 aa)).

As to expression, isoform 1: Expressed in root meristems, lateral root primordia, root vascular tissues and cotyledon vascular tissues. Isoform 2: Expressed in root meristems, lateral root primordia and root vascular tissues.

The protein resides in the nucleus speckle. Alternative splicing (AS) regulator that binds to specific mRNAs and modulates auxin effects on the transcriptome. Displaced from its targets upon binding to AS competitor long non-coding RNA (ASCO-RNA). This chain is Nuclear speckle RNA-binding protein B, found in Arabidopsis thaliana (Mouse-ear cress).